The chain runs to 118 residues: Beta-2-microglobulin (118 aa).

A signal peptide spans 1 to 20 (MARFVVLVLLGLLYLSHLDA). The Ig-like C1-type domain maps to 25-113 (PKVQVYSRHP…TTLSEPKVVK (89 aa)). Cys45 and Cys99 are disulfide-bonded.

Belongs to the beta-2-microglobulin family. As to quaternary structure, heterodimer of an alpha chain and a beta chain. Beta-2-microglobulin is the beta-chain of major histocompatibility complex class I molecules.

Its subcellular location is the secreted. Component of the class I major histocompatibility complex (MHC). Involved in the presentation of peptide antigens to the immune system. This Felis catus (Cat) protein is Beta-2-microglobulin (B2M).